The sequence spans 332 residues: Transcription factor ZEB2 (332 aa).

The disordered stretch occupies residues 1–37 (MQSTESFHALPTRSDVEDPNERRKIQNRIAQKKHRQK). Residues 14-24 (SDVEDPNERRK) are compositionally biased toward basic and acidic residues. One can recognise a bZIP domain in the interval 17–50 (EDPNERRKIQNRIAQKKHRQKMKRRIEELETKVN). Positions 21 to 43 (ERRKIQNRIAQKKHRQKMKRRIE) are basic motif. Residues 45-52 (LETKVNNQ) are leucine-zipper. A disordered region spans residues 106–170 (MHDSPRPNQQ…EGSLPTRQHD (65 aa)). Over residues 111-134 (RPNQQQRLSVSGMPSSPTSTSNVA) the composition is skewed to polar residues. The span at 143–155 (HSSASNHLSSLSL) shows a compositional bias: low complexity. Polar residues predominate over residues 160–170 (TEGSLPTRQHD).

The protein belongs to the bZIP family.

It is found in the nucleus. Functionally, transcription factor that specifically controls transcription of the zearalenone biosynthesis cluster genes. In Gibberella zeae (strain ATCC MYA-4620 / CBS 123657 / FGSC 9075 / NRRL 31084 / PH-1) (Wheat head blight fungus), this protein is Transcription factor ZEB2.